The chain runs to 212 residues: Protein-L-isoaspartate O-methyltransferase (212 aa).

The active site involves Ser-60.

Belongs to the methyltransferase superfamily. L-isoaspartyl/D-aspartyl protein methyltransferase family.

The protein localises to the cytoplasm. It catalyses the reaction [protein]-L-isoaspartate + S-adenosyl-L-methionine = [protein]-L-isoaspartate alpha-methyl ester + S-adenosyl-L-homocysteine. Catalyzes the methyl esterification of L-isoaspartyl residues in peptides and proteins that result from spontaneous decomposition of normal L-aspartyl and L-asparaginyl residues. It plays a role in the repair and/or degradation of damaged proteins. In Pseudomonas putida (strain ATCC 700007 / DSM 6899 / JCM 31910 / BCRC 17059 / LMG 24140 / F1), this protein is Protein-L-isoaspartate O-methyltransferase.